A 452-amino-acid polypeptide reads, in one-letter code: Phosphoglucosamine mutase (452 aa).

The Phosphoserine intermediate role is filled by serine 101. Mg(2+) contacts are provided by serine 101, aspartate 241, aspartate 243, and aspartate 245. Serine 101 carries the post-translational modification Phosphoserine.

Belongs to the phosphohexose mutase family. Mg(2+) is required as a cofactor. In terms of processing, activated by phosphorylation.

The enzyme catalyses alpha-D-glucosamine 1-phosphate = D-glucosamine 6-phosphate. Functionally, catalyzes the conversion of glucosamine-6-phosphate to glucosamine-1-phosphate. The protein is Phosphoglucosamine mutase of Lactococcus lactis subsp. lactis (strain IL1403) (Streptococcus lactis).